Reading from the N-terminus, the 235-residue chain is uncharacterized protein (235 aa).

2 consecutive transmembrane segments (helical) span residues 167 to 187 (AFKL…LNEL) and 190 to 210 (LFAY…LLLW).

It is found in the membrane. This is an uncharacterized protein from Saccharomyces cerevisiae (strain ATCC 204508 / S288c) (Baker's yeast).